The primary structure comprises 203 residues: Small ribosomal subunit protein uS4 (203 aa).

The region spanning 93 to 156 is the S4 RNA-binding domain; that stretch reads RRLDNVVYRL…AKVPAILEAV (64 aa).

Belongs to the universal ribosomal protein uS4 family. In terms of assembly, part of the 30S ribosomal subunit. Contacts protein S5. The interaction surface between S4 and S5 is involved in control of translational fidelity.

In terms of biological role, one of the primary rRNA binding proteins, it binds directly to 16S rRNA where it nucleates assembly of the body of the 30S subunit. Functionally, with S5 and S12 plays an important role in translational accuracy. The protein is Small ribosomal subunit protein uS4 of Streptococcus thermophilus (strain CNRZ 1066).